The chain runs to 433 residues: uncharacterized protein (433 aa).

Its subcellular location is the virion. This is an uncharacterized protein from Acanthamoeba polyphaga (Amoeba).